The chain runs to 131 residues: Leptin receptor gene-related protein (131 aa).

4 consecutive transmembrane segments (helical) span residues 7 to 27 (LVAL…GCAL), 32 to 52 (VYWP…HFIA), 69 to 89 (LAYF…VILA), and 100 to 120 (GLVL…FLIF).

This sequence belongs to the OB-RGRP/VPS55 family. Interacts with LEPR. Interacts with RAB13. Expressed at the highest levels in heart and placenta and at a lesser extent in lung, liver, skeletal muscle, kidney and pancreas.

The protein resides in the golgi apparatus membrane. It localises to the endosome membrane. Its function is as follows. Negatively regulates leptin receptor (LEPR) cell surface expression, and thus decreases response to leptin. Negatively regulates growth hormone (GH) receptor cell surface expression in liver. May play a role in liver resistance to GH during periods of reduced nutrient availability. The polypeptide is Leptin receptor gene-related protein (LEPROT) (Homo sapiens (Human)).